Consider the following 367-residue polypeptide: Alanine racemase (367 aa).

The active-site Proton acceptor; specific for D-alanine is the Lys-40. N6-(pyridoxal phosphate)lysine is present on Lys-40. Arg-136 provides a ligand contact to substrate. The active-site Proton acceptor; specific for L-alanine is Tyr-263. Met-310 lines the substrate pocket.

The protein belongs to the alanine racemase family. Requires pyridoxal 5'-phosphate as cofactor.

It catalyses the reaction L-alanine = D-alanine. It functions in the pathway amino-acid biosynthesis; D-alanine biosynthesis; D-alanine from L-alanine: step 1/1. Functionally, catalyzes the interconversion of L-alanine and D-alanine. May also act on other amino acids. The chain is Alanine racemase (alr) from Lactococcus lactis subsp. cremoris (strain SK11).